The sequence spans 647 residues: MALSTILTAAAMPVAGLFAFAQQSSAFFDQIPVLGSMLNSPVGTYDAQAAQMDGRIQARDLLSSHFGPVGWPHQSFDYVIVGGGTAGLAMAKRLSEEEGNSVALIEAGGFYEMDAGNATEVPMYLFNYFFDNGYMKNPLFDWYQYTEPQEGLHNREMFYMQGKTLGGSTARGAMLYHRGSKGAYQKWADEVGDDSYTWEKWLPHFQRGIKFSGPNTNPRPANATAVNDDKAWSASGGPVHVAYPYLTNAISSWVDKALDSFGFSNVQGFSNGVLLGKSYITHTINPFTRRRETASSSYLREALVESNNLNIYIRTLAKKVLFDENKKANAVEVQTDGFKWKIEAKKEVILSAGVMRSPQLLMVSGIGPKETLEKLDIPVLSDRPGVGQNMQDTIILGPTNPIRVESHSQLLGGKDTLPRSIDDYNNHRTGLLTNPGQDFFAFEKHAEEGPGSLSKETAADIDANFPADWPTYSFIALDDTFVPQFNGKNYFSMSAALMTTFSRGYVSINSTDTLDNPIVDPKWLSDPRDQEMAVAAFRRCRQFTQHEILQDVIDGEELLPGKKYQTDDEVLGYIAETSDAYYAGVGTAAMGKKDDPKAVLDSKARVLGVQGLRVVDASSFPFAIDGQPMGTVYALAEKIAADIIAGN.

An N-terminal signal peptide occupies residues 1-26; that stretch reads MALSTILTAAAMPVAGLFAFAQQSSA. Residues 85 to 86 and 106 to 107 each bind FAD; these read TA and EA. Residue Asn-117 is glycosylated (N-linked (GlcNAc...) asparagine). 172 to 175 is an FAD binding site; it reads GAML. Asn-222 and Asn-509 each carry an N-linked (GlcNAc...) asparagine glycan. Residues Ala-617 and 628-629 contribute to the FAD site; that span reads PM.

This sequence belongs to the GMC oxidoreductase family. In terms of assembly, homodimer. FAD is required as a cofactor.

The protein resides in the cytoplasm. Its subcellular location is the cytosol. It catalyses the reaction (2S-3S)-versiconal hemiacetal = versicolorin B + H2O. The enzyme catalyses (S)-5'-oxoaverantin + H(+) = (1'S,5'S)-averufin + H2O. The protein operates within mycotoxin biosynthesis. Its function is as follows. Versicolorin B synthase; part of the fragmented gene cluster that mediates the biosynthesis of dothistromin (DOTH), a polyketide toxin very similar in structure to the aflatoxin precursor, versicolorin B. The first step of the pathway is the conversion of acetate to norsolorinic acid (NOR) and requires the fatty acid synthase subunits hexA and hexB, as well as the polyketide synthase pksA. PksA combines a hexanoyl starter unit and 7 malonyl-CoA extender units to synthesize the precursor NOR. The hexanoyl starter unit is provided to the acyl-carrier protein (ACP) domain by the fungal fatty acid synthase hexA/hexB. The second step is the conversion of NOR to averantin (AVN) and requires the norsolorinic acid ketoreductase nor1, which catalyzes the dehydration of norsolorinic acid to form (1'S)-averantin. The cytochrome P450 monooxygenase avnA then catalyzes the hydroxylation of AVN to 5'hydroxyaverantin (HAVN). The next step is performed by adhA that transforms HAVN to averufin (AVF). Averufin might then be converted to hydroxyversicolorone by cypX and avfA. Hydroxyversicolorone is further converted versiconal hemiacetal acetate (VHA) by moxY. VHA is then the substrate for the versiconal hemiacetal acetate esterase est1 to yield versiconal (VAL). Versicolorin B synthase vbsA then converts VAL to versicolorin B (VERB) by closing the bisfuran ring. Then, the activity of the versicolorin B desaturase verB leads to versicolorin A (VERA). DotB, a predicted chloroperoxidase, may perform epoxidation of the A-ring of VERA. Alternatively, a cytochrome P450, such as cypX or avnA could catalyze this step. It is also possible that another, uncharacterized, cytochrome P450 enzyme is responsible for this step. Opening of the epoxide could potentially be achieved by the epoxide hydrolase epoA. However, epoA seems not to be required for DOTH biosynthesis, but other epoxide hydrolases may have the ability to complement this hydrolysis. Alternatively, opening of the epoxide ring could be achieved non-enzymatically. The next step is the deoxygenation of ring A to yield the 5,8-dihydroxyanthraquinone which is most likely catalyzed by the NADPH dehydrogenase encoded by ver1. The last stages of DOTH biosynthesis are proposed to involve hydroxylation of the bisfuran. OrdB and norB might have oxidative roles here. An alternative possibility is that cytochrome P450 monoogenases such as avnA and cypX might perform these steps in addition to previously proposed steps. The sequence is that of Versicolorin B synthase from Dothistroma septosporum (Red band needle blight fungus).